The sequence spans 308 residues: HTH-type transcriptional activator AllS (308 aa).

The 58-residue stretch at 2–59 (FDPETLRTFIAVAETGSFSKAAERLCKTTATISYRIKLLEENTGVALFFRTTRSVTLT) folds into the HTH lysR-type domain. Residues 19–38 (FSKAAERLCKTTATISYRIK) constitute a DNA-binding region (H-T-H motif).

It belongs to the LysR transcriptional regulatory family.

In terms of biological role, positive regulator essential for the expression of allD operon. Binds to the allD promoter. This chain is HTH-type transcriptional activator AllS (allS), found in Escherichia coli O6:K15:H31 (strain 536 / UPEC).